A 239-amino-acid polypeptide reads, in one-letter code: Uridylate kinase (239 aa).

12 to 15 (KLSG) contributes to the ATP binding site. G54 lines the UMP pocket. 2 residues coordinate ATP: G55 and R59. Residues D74 and 135-142 (TGNPYFTT) contribute to the UMP site. ATP-binding residues include T162, Y168, and D171.

The protein belongs to the UMP kinase family. As to quaternary structure, homohexamer.

The protein resides in the cytoplasm. The enzyme catalyses UMP + ATP = UDP + ADP. Its pathway is pyrimidine metabolism; CTP biosynthesis via de novo pathway; UDP from UMP (UMPK route): step 1/1. With respect to regulation, inhibited by UTP. Functionally, catalyzes the reversible phosphorylation of UMP to UDP. The protein is Uridylate kinase of Fusobacterium nucleatum subsp. nucleatum (strain ATCC 25586 / DSM 15643 / BCRC 10681 / CIP 101130 / JCM 8532 / KCTC 2640 / LMG 13131 / VPI 4355).